We begin with the raw amino-acid sequence, 179 residues long: ATP synthase subunit delta (179 aa).

The protein belongs to the ATPase delta chain family. In terms of assembly, F-type ATPases have 2 components, F(1) - the catalytic core - and F(0) - the membrane proton channel. F(1) has five subunits: alpha(3), beta(3), gamma(1), delta(1), epsilon(1). F(0) has three main subunits: a(1), b(2) and c(10-14). The alpha and beta chains form an alternating ring which encloses part of the gamma chain. F(1) is attached to F(0) by a central stalk formed by the gamma and epsilon chains, while a peripheral stalk is formed by the delta and b chains.

It localises to the cell inner membrane. F(1)F(0) ATP synthase produces ATP from ADP in the presence of a proton or sodium gradient. F-type ATPases consist of two structural domains, F(1) containing the extramembraneous catalytic core and F(0) containing the membrane proton channel, linked together by a central stalk and a peripheral stalk. During catalysis, ATP synthesis in the catalytic domain of F(1) is coupled via a rotary mechanism of the central stalk subunits to proton translocation. Its function is as follows. This protein is part of the stalk that links CF(0) to CF(1). It either transmits conformational changes from CF(0) to CF(1) or is implicated in proton conduction. The protein is ATP synthase subunit delta of Anaeromyxobacter sp. (strain K).